A 294-amino-acid polypeptide reads, in one-letter code: Ventral anterior homeobox 2b (294 aa).

A compositionally biased stretch (basic and acidic residues) spans 1 to 10 (MGDGVSEERS). 5 disordered regions span residues 1-27 (MGDGVSEERSPLCGKSATSCSERVRDR), 43-65 (KDIPVTSTSSPGSSKEEVLDSQS), 149-168 (RRTKQKKDQSRDSEKRSSST), 190-223 (PAPPNMISSQNNMGTSSGNGTSLGTSGSTSPVIS), and 272-294 (SSAFEPYTRLDRKDTASGKKSTS). A DNA-binding region (homeobox) is located at residues 98–157 (PKRTRTSFTAEQLYRLELEFQRCQYVVGRERTELARQLNLSETQVKVWFQNRRTKQKKDQ). Basic and acidic residues predominate over residues 154–165 (KKDQSRDSEKRS). Positions 197–219 (SSQNNMGTSSGNGTSLGTSGSTS) are enriched in low complexity. Residues 279–288 (TRLDRKDTAS) are compositionally biased toward basic and acidic residues.

The protein belongs to the EMX homeobox family.

It localises to the nucleus. Transcription factor that may function in dorsoventral specification of the forebrain. Regulates the expression of Wnt signaling antagonists. The polypeptide is Ventral anterior homeobox 2b (vax2-b) (Xenopus laevis (African clawed frog)).